Here is a 191-residue protein sequence, read N- to C-terminus: Peptidyl-tRNA hydrolase (191 aa).

Y14 is a binding site for tRNA. Catalysis depends on H19, which acts as the Proton acceptor. The tRNA site is built by Y64, N66, and N112.

The protein belongs to the PTH family. Monomer.

It is found in the cytoplasm. The catalysed reaction is an N-acyl-L-alpha-aminoacyl-tRNA + H2O = an N-acyl-L-amino acid + a tRNA + H(+). In terms of biological role, hydrolyzes ribosome-free peptidyl-tRNAs (with 1 or more amino acids incorporated), which drop off the ribosome during protein synthesis, or as a result of ribosome stalling. Its function is as follows. Catalyzes the release of premature peptidyl moieties from peptidyl-tRNA molecules trapped in stalled 50S ribosomal subunits, and thus maintains levels of free tRNAs and 50S ribosomes. In Syntrophotalea carbinolica (strain DSM 2380 / NBRC 103641 / GraBd1) (Pelobacter carbinolicus), this protein is Peptidyl-tRNA hydrolase.